Reading from the N-terminus, the 385-residue chain is uncharacterized protein (385 aa).

A run of 9 helical transmembrane segments spans residues 12-32, 50-70, 90-110, 132-152, 195-215, 233-253, 272-292, 312-332, and 335-355; these read GVAI…PKAA, WAFL…LLFG, LLVL…ILLA, FNTG…LGLI, LALG…GAAL, TGFV…ALQW, LSAP…WPQL, YLLQ…FMHF, and LELL…SVIW.

The protein to B.subtilis YxaH and YrkO.

The protein resides in the cell membrane. Involved in transport. This is an uncharacterized protein from Escherichia coli (strain K12).